A 270-amino-acid chain; its full sequence is Urease accessory protein UreD (270 aa).

This sequence belongs to the UreD family. UreD, UreF and UreG form a complex that acts as a GTP-hydrolysis-dependent molecular chaperone, activating the urease apoprotein by helping to assemble the nickel containing metallocenter of UreC. The UreE protein probably delivers the nickel.

It localises to the cytoplasm. Required for maturation of urease via the functional incorporation of the urease nickel metallocenter. The protein is Urease accessory protein UreD of Actinobacillus pleuropneumoniae serotype 5b (strain L20).